Reading from the N-terminus, the 597-residue chain is Elongation factor 4 (597 aa).

One can recognise a tr-type G domain in the interval 2-184 (DHIRNFSIIA…SLIAKVPPPK (183 aa)). Residues 14-19 (DHGKST) and 131-134 (NKID) contribute to the GTP site.

Belongs to the TRAFAC class translation factor GTPase superfamily. Classic translation factor GTPase family. LepA subfamily.

It is found in the cell inner membrane. It catalyses the reaction GTP + H2O = GDP + phosphate + H(+). Functionally, required for accurate and efficient protein synthesis under certain stress conditions. May act as a fidelity factor of the translation reaction, by catalyzing a one-codon backward translocation of tRNAs on improperly translocated ribosomes. Back-translocation proceeds from a post-translocation (POST) complex to a pre-translocation (PRE) complex, thus giving elongation factor G a second chance to translocate the tRNAs correctly. Binds to ribosomes in a GTP-dependent manner. This chain is Elongation factor 4, found in Burkholderia ambifaria (strain MC40-6).